The following is a 179-amino-acid chain: Protein GrpE (179 aa).

The interval 1–29 is disordered; the sequence is MQDQDKYAEQAASIEDPVTAEAASATTPT.

This sequence belongs to the GrpE family. In terms of assembly, homodimer.

The protein resides in the cytoplasm. Participates actively in the response to hyperosmotic and heat shock by preventing the aggregation of stress-denatured proteins, in association with DnaK and GrpE. It is the nucleotide exchange factor for DnaK and may function as a thermosensor. Unfolded proteins bind initially to DnaJ; upon interaction with the DnaJ-bound protein, DnaK hydrolyzes its bound ATP, resulting in the formation of a stable complex. GrpE releases ADP from DnaK; ATP binding to DnaK triggers the release of the substrate protein, thus completing the reaction cycle. Several rounds of ATP-dependent interactions between DnaJ, DnaK and GrpE are required for fully efficient folding. This Janthinobacterium sp. (strain Marseille) (Minibacterium massiliensis) protein is Protein GrpE.